We begin with the raw amino-acid sequence, 147 residues long: Hemoglobin subunit beta (147 aa).

Residues 3-147 (EWTDKERSII…VVSALGKQYH (145 aa)) enclose the Globin domain. Positions 64 and 93 each coordinate heme b.

Belongs to the globin family. As to quaternary structure, hb1 is a heterotetramer of two alpha chains and two beta chains. In terms of tissue distribution, red blood cells.

Involved in oxygen transport from gills to the various peripheral tissues. The polypeptide is Hemoglobin subunit beta (hbb) (Trematomus bernacchii (Emerald rockcod)).